Consider the following 402-residue polypeptide: Arginine deiminase (402 aa).

Cys392 (amidino-cysteine intermediate) is an active-site residue.

This sequence belongs to the arginine deiminase family.

It is found in the cytoplasm. It carries out the reaction L-arginine + H2O = L-citrulline + NH4(+). The protein operates within amino-acid degradation; L-arginine degradation via ADI pathway; carbamoyl phosphate from L-arginine: step 1/2. The protein is Arginine deiminase (arcA) of Mycobacterium bovis (strain ATCC BAA-935 / AF2122/97).